Reading from the N-terminus, the 497-residue chain is CRISPR-associated endodeoxyribonuclease Cas12f1 (497 aa).

The interval 29-122 is recognition domain (REC); that stretch reads RKDLSTMSRF…PTYKITTAPI (94 aa). The interval 123–214 is wedge domain (WED); it reads RLQNNIYKLI…YCIIPYTFPT (92 aa). A linker region spans residues 215–223; sequence HETVLDPDK. The tract at residues 224 to 374 is ruvC-I; that stretch reads VMGVDLGVAK…VAINPQYTSQ (151 aa). Catalysis depends on residues aspartate 228 and glutamate 327. The segment at 375 to 432 is target nucleic acid-binding (TNB); that stretch reads RCSMCGYIEKTNRSSQAVFECKQCGYGSRTICINCRHVQVSGDVCEECGGIVKKENVN. Zn(2+) is bound by residues cysteine 376, cysteine 379, cysteine 395, and cysteine 398. A ruvC-II region spans residues 433–453; the sequence is ADYNAAKNISTPYIDQIIMEK. Residue aspartate 434 is part of the active site.

The protein belongs to the CRISPR-associated endonuclease Cas12f family. As to quaternary structure, an asymmetric homodimer. Guide RNA is probably required for dimerization. The cofactor is Mg(2+). Zn(2+) serves as cofactor.

CRISPR (clustered regularly interspaced short palindromic repeat), is an adaptive immune system that provides protection against mobile genetic elements (viruses, transposable elements and conjugative plasmids). CRISPR clusters contain sequences complementary to antecedent mobile elements and target invading nucleic acids. CRISPR clusters are transcribed and processed into CRISPR RNA (crRNA), which requires a trans-encoded small RNA (tracrRNA), but not this protein. Recognizes a short motif in the CRISPR repeat sequences (the 5' PAM or protospacer adjacent motif, TTC in this organism) to help distinguish self versus nonself, as targets within the CRISPR locus do not have PAMs. Has dsDNA endonuclease activity upon expression in E.coli of this protein, a mini CRISPR array and the probable tracrRNA. Plasmid cleavage is centered around positions 24 base pairs 3' of PAM. The mini system protects E.coli against transformation by foreign plasmids. This is CRISPR-associated endodeoxyribonuclease Cas12f1 from Syntrophomonas palmitatica (strain DSM 18709 / JCM 14374 / NBRC 102128 / MPA).